Reading from the N-terminus, the 95-residue chain is Protein TusB (95 aa).

This sequence belongs to the DsrH/TusB family. Heterohexamer, formed by a dimer of trimers. The hexameric TusBCD complex contains 2 copies each of TusB, TusC and TusD. The TusBCD complex interacts with TusE.

The protein localises to the cytoplasm. In terms of biological role, part of a sulfur-relay system required for 2-thiolation of 5-methylaminomethyl-2-thiouridine (mnm(5)s(2)U) at tRNA wobble positions. The chain is Protein TusB from Cronobacter sakazakii (strain ATCC BAA-894) (Enterobacter sakazakii).